A 339-amino-acid chain; its full sequence is MEITLFDPIDAHLHVRENALLKAVLGYSSEPFSAAVIMPNLSKPLIDTPTTLEYEEEILNHSSNFKPLMSLYFNDGLTLEELQCAKEKGVRFLKLYPKGMTTNAQNGTSDLLGEKTLEVLENAQKLGFILCIHAEQTGFCLDKEFLCHSVLETFALSFPKLKIIIEHLSDWRSIALIEKHDNLYATLTLHHISMTLDDLLGGSLNPHCFCKPLIKTKKDQERLLSLALKAHPKISFGSDSAPHFISKKHSANIPAGIFSAPILLPALCELFEKHNALENLQAFISDNAKTIYGLENLPSKKARLSKKPFMIPTHTLCLNEKIAILRGGETLSWNLQEIA.

Residues His-12 and His-14 each coordinate Zn(2+). Residues 14 to 16 (HVR) and Asn-40 each bind substrate. Lys-94, His-133, His-167, and Asp-239 together coordinate Zn(2+). At Lys-94 the chain carries N6-carboxylysine. His-133 serves as a coordination point for substrate. The active site involves Asp-239. Substrate-binding residues include His-243 and Ala-255.

It belongs to the metallo-dependent hydrolases superfamily. DHOase family. Class II DHOase subfamily. As to quaternary structure, homodimer. Zn(2+) is required as a cofactor.

It catalyses the reaction (S)-dihydroorotate + H2O = N-carbamoyl-L-aspartate + H(+). It participates in pyrimidine metabolism; UMP biosynthesis via de novo pathway; (S)-dihydroorotate from bicarbonate: step 3/3. Its function is as follows. Catalyzes the reversible cyclization of carbamoyl aspartate to dihydroorotate. This is Dihydroorotase from Helicobacter pylori (strain ATCC 700392 / 26695) (Campylobacter pylori).